The following is a 423-amino-acid chain: D-tagatose-1,6-bisphosphate aldolase subunit GatZ (423 aa).

This sequence belongs to the GatZ/KbaZ family. GatZ subfamily. In terms of assembly, forms a complex with GatY.

It participates in carbohydrate metabolism; D-tagatose 6-phosphate degradation; D-glyceraldehyde 3-phosphate and glycerone phosphate from D-tagatose 6-phosphate: step 2/2. Its function is as follows. Component of the tagatose-1,6-bisphosphate aldolase GatYZ that is required for full activity and stability of the Y subunit. Could have a chaperone-like function for the proper and stable folding of GatY. When expressed alone, GatZ does not show any aldolase activity. Is involved in the catabolism of galactitol. This Klebsiella pneumoniae subsp. pneumoniae (strain ATCC 700721 / MGH 78578) protein is D-tagatose-1,6-bisphosphate aldolase subunit GatZ.